Reading from the N-terminus, the 102-residue chain is Methane monooxygenase component D (102 aa).

The soluble methane monooxygenase (sMMO) consists of four components A/MMOH (composed of alpha/MmoX, beta/MmoY and gamma/MmoZ), B/MMOB (MmoB), C/MMOR (MmoC) and D/MMOD (MmoD).

This chain is Methane monooxygenase component D (mmoD), found in Methylosinus trichosporium.